Consider the following 421-residue polypeptide: Homoserine dehydrogenase (421 aa).

Residues Val15, Ala34, and Val44 each contribute to the NAD(+) site. Val15 lines the NADP(+) pocket. Residue Val15 participates in NADPH binding. NADP(+) is bound by residues Arg46 and Lys103. Arg46 and Lys103 together coordinate NADPH. The Na(+) site is built by Glu125, Val128, Gly130, and Ile132. Residues Gly183 and Glu186 each contribute to the NADP(+) site. Residues Glu186 and Asp197 each coordinate L-homoserine. Residue Lys201 is the Proton donor of the active site. Gly298 serves as a coordination point for NAD(+). An NADP(+)-binding site is contributed by Gly298. Gly298 lines the NADPH pocket. The region spanning Tyr343–Arg418 is the ACT domain.

It belongs to the homoserine dehydrogenase family. It depends on a metal cation as a cofactor.

It catalyses the reaction L-homoserine + NADP(+) = L-aspartate 4-semialdehyde + NADPH + H(+). It carries out the reaction L-homoserine + NAD(+) = L-aspartate 4-semialdehyde + NADH + H(+). Its pathway is amino-acid biosynthesis; L-methionine biosynthesis via de novo pathway; L-homoserine from L-aspartate: step 3/3. The protein operates within amino-acid biosynthesis; L-threonine biosynthesis; L-threonine from L-aspartate: step 3/5. Its function is as follows. Catalyzes the conversion of L-aspartate-beta-semialdehyde (L-Asa) to L-homoserine (L-Hse), the third step in the biosynthesis of threonine and methionine from aspartate. This is Homoserine dehydrogenase (hom) from Helicobacter pylori (strain ATCC 700392 / 26695) (Campylobacter pylori).